The following is a 332-amino-acid chain: Methionine synthase (332 aa).

Histidine 211, cysteine 213, and cysteine 296 together coordinate Zn(2+).

The protein belongs to the archaeal MetE family. The cofactor is Zn(2+).

It participates in amino-acid biosynthesis; L-methionine biosynthesis via de novo pathway. Its function is as follows. Catalyzes the transfer of a methyl group to L-homocysteine resulting in methionine formation. The physiological methyl donor is unknown. This is Methionine synthase from Saccharolobus islandicus (strain L.S.2.15 / Lassen #1) (Sulfolobus islandicus).